A 355-amino-acid chain; its full sequence is DNA polymerase IV (355 aa).

The UmuC domain occupies 7 to 188; it reads IIHIDMDCFY…LPVRKLFGVG (182 aa). Residues aspartate 11 and aspartate 106 each contribute to the Mg(2+) site. Residue glutamate 107 is part of the active site.

It belongs to the DNA polymerase type-Y family. Monomer. The cofactor is Mg(2+).

The protein localises to the cytoplasm. The enzyme catalyses DNA(n) + a 2'-deoxyribonucleoside 5'-triphosphate = DNA(n+1) + diphosphate. Poorly processive, error-prone DNA polymerase involved in untargeted mutagenesis. Copies undamaged DNA at stalled replication forks, which arise in vivo from mismatched or misaligned primer ends. These misaligned primers can be extended by PolIV. Exhibits no 3'-5' exonuclease (proofreading) activity. May be involved in translesional synthesis, in conjunction with the beta clamp from PolIII. The protein is DNA polymerase IV of Legionella pneumophila (strain Lens).